Consider the following 256-residue polypeptide: Enolase-phosphatase E1 (256 aa).

Mg(2+)-binding residues include Asp14 and Glu16. Residues 142 to 143 (SS) and Lys176 contribute to the substrate site. Asp201 is a binding site for Mg(2+).

The protein belongs to the HAD-like hydrolase superfamily. MasA/MtnC family. As to quaternary structure, monomer. Mg(2+) serves as cofactor.

It localises to the cytoplasm. Its subcellular location is the nucleus. It carries out the reaction 5-methylsulfanyl-2,3-dioxopentyl phosphate + H2O = 1,2-dihydroxy-5-(methylsulfanyl)pent-1-en-3-one + phosphate. The protein operates within amino-acid biosynthesis; L-methionine biosynthesis via salvage pathway; L-methionine from S-methyl-5-thio-alpha-D-ribose 1-phosphate: step 3/6. It functions in the pathway amino-acid biosynthesis; L-methionine biosynthesis via salvage pathway; L-methionine from S-methyl-5-thio-alpha-D-ribose 1-phosphate: step 4/6. In terms of biological role, bifunctional enzyme that catalyzes the enolization of 2,3-diketo-5-methylthiopentyl-1-phosphate (DK-MTP-1-P) into the intermediate 2-hydroxy-3-keto-5-methylthiopentenyl-1-phosphate (HK-MTPenyl-1-P), which is then dephosphorylated to form the acireductone 1,2-dihydroxy-3-keto-5-methylthiopentene (DHK-MTPene). In Drosophila simulans (Fruit fly), this protein is Enolase-phosphatase E1.